The primary structure comprises 1234 residues: MTAPGPACSDTPIAGLVELALSAPTFQQLMQRAGGRPDELTLIAPASARLLVASALARQGPLLVVTATGREADDLAAELRGVFGDAVALLPSWETLPHERLSPGVDTVGTRLMALRRLAHPDDAQLGPPLGVVVTSVRSLLQPMTPQLGMMEPLTLTVGDESPFDGVVARLVELAYTRVDMVGRRGEFAVRGGILDIFAPTAEHPVRVEFWGDEITEMRMFSVADQRSIPEIDIHTLVAFACRELLLSEDVRARAAQLAARHPAAESTVTGSASDMLAKLAEGIAVDGMEAVLPVLWSDGHALLTDQLPDGTPVLVCDPEKVRTRAADLIRTGREFLEASWSVAALGTAENQAPVDVEQLGGSGFVELDQVRAAAARTGHPWWTLSQLSDESAIELDVRAAPSARGHQRDIDEIFAMLRAHIATGGYAALVAPGTGTAHRVVERLSESDTPAGMLDPGQAPKPGVVGVLQGPLRDGVIIPGANLVVITETDLTGSRVSAAEGKRLAAKRRNIVDPLALTAGDLVVHDQHGIGRFVEMVERTVGGARREYLVLEYASAKRGGGAKNTDKLYVPMDSLDQLSRYVGGQAPALSRLGGSDWANTKTKARRAVREIAGELVSLYAKRQASPGHAFSPDTPWQAELEDAFGFTETVDQLTAIEEVKADMEKPIPMDRVICGDVGYGKTEIAVRAAFKAVQDGKQVAVLVPTTLLADQHLQTFGERMSGFPVTIKGLSRFTDAAESRAVIDGLADGSVDIVIGTHRLLQTGVRWKDLGLVVVDEEQRFGVEHKEHIKSLRTHVDVLTMSATPIPRTLEMSLAGIREMSTILTPPEERYPVLTYVGPHDDKQIAAALRRELLRDGQAFYVHNRVSSIDAAAARVRELVPEARVVVAHGQMPEDLLETTVQRFWNREHDILVCTTIVETGLDISNANTLIVERADTFGLSQLHQLRGRVGRSRERGYAYFLYPPQVPLTETAYDRLATIAQNNELGAGMAVALKDLEIRGAGNVLGIEQSGHVAGVGFDLYVRLVGEALETYRDAYRAAADGQTVRTAEEPKDVRIDLPVDAHLPPDYIASDRLRLEGYRRLAAASSDREVAAVVDELTDRYGALPEPARRLAAVARLRLLCRGSGITDVTAASAATVRLSPLTLPDSAQVRLKRMYPGAHYRATTATVQVPIPRAGGLGAPRIRDVELVQMVADLITALAGKPRQHIGITNPSPPGEDGRGRNTTIKERQP.

The Helicase ATP-binding domain maps to 663–824; the sequence is DMEKPIPMDR…LAGIREMSTI (162 aa). Residue 676 to 683 participates in ATP binding; sequence GDVGYGKT. The DEEQ box signature appears at 777-780; it reads DEEQ. A Helicase C-terminal domain is found at 842–999; sequence DDKQIAAALR…GMAVALKDLE (158 aa). The segment at 1207–1234 is disordered; that stretch reads RQHIGITNPSPPGEDGRGRNTTIKERQP. The span at 1220 to 1234 shows a compositional bias: basic and acidic residues; it reads EDGRGRNTTIKERQP.

In the N-terminal section; belongs to the UvrB family. It in the C-terminal section; belongs to the helicase family. RecG subfamily.

Its subcellular location is the cytoplasm. Functionally, couples transcription and DNA repair by recognizing RNA polymerase (RNAP) stalled at DNA lesions. Mediates ATP-dependent release of RNAP and its truncated transcript from the DNA, and recruitment of nucleotide excision repair machinery to the damaged site. The sequence is that of Transcription-repair-coupling factor from Mycobacterium bovis (strain ATCC BAA-935 / AF2122/97).